The chain runs to 152 residues: UPF0225 protein Ent638_2310 (152 aa).

This sequence belongs to the UPF0225 family.

The polypeptide is UPF0225 protein Ent638_2310 (Enterobacter sp. (strain 638)).